A 190-amino-acid chain; its full sequence is Syndecan-2-B (190 aa).

Positions 1–22 are cleaved as a signal peptide; the sequence is MRNVWLIVPFALLAAFSGETWA. At 23–136 the chain is on the extracellular side; the sequence is QADRDLYIDS…NLFHRTEVLA (114 aa). The interval 34 to 60 is disordered; the sequence is ESSGNYPVDDDDYSSGSGSGIPAHDDD. 4 O-linked (Xyl...) (glycosaminoglycan) serine glycosylation sites follow: Ser-36, Ser-48, Ser-50, and Ser-52. Residues 137–157 form a helical membrane-spanning segment; sequence AVIAGGGIGFLFAVFLILLLV. Residues 158 to 190 are Cytoplasmic-facing; it reads YRMRKKDEGSYDLGERKPSSAVYQKAPTKEFYA. The segment at 167 to 190 is disordered; sequence SYDLGERKPSSAVYQKAPTKEFYA.

It belongs to the syndecan proteoglycan family. In terms of processing, O-glycosylated; contains both heparan sulfate and chondroitin sulfate.

The protein resides in the membrane. Cell surface proteoglycan. This is Syndecan-2-B (sdc2-b) from Xenopus laevis (African clawed frog).